Here is a 308-residue protein sequence, read N- to C-terminus: HPr kinase/phosphorylase (308 aa).

Catalysis depends on residues His-138 and Lys-159. 153–160 (GESGLGKS) contributes to the ATP binding site. Mg(2+) is bound at residue Ser-160. Asp-177 serves as the catalytic Proton acceptor; for phosphorylation activity. Proton donor; for dephosphorylation activity. Residues 201-210 (LEVRGLGLLD) form an important for the catalytic mechanism of both phosphorylation and dephosphorylation region. Glu-202 provides a ligand contact to Mg(2+). Arg-243 is an active-site residue. The tract at residues 264–269 (QVAAGR) is important for the catalytic mechanism of dephosphorylation.

This sequence belongs to the HPrK/P family. As to quaternary structure, homohexamer. Requires Mg(2+) as cofactor.

The enzyme catalyses [HPr protein]-L-serine + ATP = [HPr protein]-O-phospho-L-serine + ADP + H(+). It catalyses the reaction [HPr protein]-O-phospho-L-serine + phosphate + H(+) = [HPr protein]-L-serine + diphosphate. Catalyzes the ATP- as well as the pyrophosphate-dependent phosphorylation of a specific serine residue in HPr, a phosphocarrier protein of the phosphoenolpyruvate-dependent sugar phosphotransferase system (PTS). HprK/P also catalyzes the pyrophosphate-producing, inorganic phosphate-dependent dephosphorylation (phosphorolysis) of seryl-phosphorylated HPr (P-Ser-HPr). The chain is HPr kinase/phosphorylase from Bordetella bronchiseptica (strain ATCC BAA-588 / NCTC 13252 / RB50) (Alcaligenes bronchisepticus).